We begin with the raw amino-acid sequence, 349 residues long: Putative transport protein jhp_0514 (349 aa).

The next 8 membrane-spanning stretches (helical) occupy residues 6-26 (FFWI…QDFL), 27-47 (MDAL…VFLN), 56-76 (SFLC…FIVY), 143-163 (LKLV…FYYG), 195-215 (VLLT…TMII), 224-244 (LGIL…LIWI), 258-278 (EAIF…DSVI), and 300-320 (ILIF…GIIV).

Belongs to the autoinducer-2 exporter (AI-2E) (TC 2.A.86) family.

It localises to the cell membrane. In Helicobacter pylori (strain J99 / ATCC 700824) (Campylobacter pylori J99), this protein is Putative transport protein jhp_0514.